Reading from the N-terminus, the 242-residue chain is Uridylate kinase (242 aa).

17-20 (KLSG) contributes to the ATP binding site. Gly-59 contributes to the UMP binding site. ATP is bound by residues Gly-60 and Arg-64. UMP is bound by residues Asp-79 and 140-147 (LGNPFFTT). ATP contacts are provided by Thr-167, Tyr-173, and Asp-176.

It belongs to the UMP kinase family. As to quaternary structure, homohexamer.

Its subcellular location is the cytoplasm. The enzyme catalyses UMP + ATP = UDP + ADP. It participates in pyrimidine metabolism; CTP biosynthesis via de novo pathway; UDP from UMP (UMPK route): step 1/1. With respect to regulation, inhibited by UTP. Functionally, catalyzes the reversible phosphorylation of UMP to UDP. The chain is Uridylate kinase from Buchnera aphidicola subsp. Baizongia pistaciae (strain Bp).